A 437-amino-acid chain; its full sequence is tRNA-2-methylthio-N(6)-dimethylallyladenosine synthase (437 aa).

The MTTase N-terminal domain maps to 1 to 115 (MKVYIETMGC…ISQVIHKEKA (115 aa)). Positions 10, 46, 78, 148, 152, and 155 each coordinate [4Fe-4S] cluster. The Radical SAM core domain maps to 134 to 367 (KKAQIRSLLN…QNRHKEILEE (234 aa)). One can recognise a TRAM domain in the interval 370–436 (KLEVGKTHVV…KGRLMATTKG (67 aa)).

It belongs to the methylthiotransferase family. MiaB subfamily. In terms of assembly, monomer. [4Fe-4S] cluster serves as cofactor.

The protein localises to the cytoplasm. It carries out the reaction N(6)-dimethylallyladenosine(37) in tRNA + (sulfur carrier)-SH + AH2 + 2 S-adenosyl-L-methionine = 2-methylsulfanyl-N(6)-dimethylallyladenosine(37) in tRNA + (sulfur carrier)-H + 5'-deoxyadenosine + L-methionine + A + S-adenosyl-L-homocysteine + 2 H(+). Its function is as follows. Catalyzes the methylthiolation of N6-(dimethylallyl)adenosine (i(6)A), leading to the formation of 2-methylthio-N6-(dimethylallyl)adenosine (ms(2)i(6)A) at position 37 in tRNAs that read codons beginning with uridine. This Helicobacter pylori (strain J99 / ATCC 700824) (Campylobacter pylori J99) protein is tRNA-2-methylthio-N(6)-dimethylallyladenosine synthase.